The chain runs to 114 residues: T cell receptor beta variable 4-3 (114 aa).

The signal sequence occupies residues 1 to 21 (MGCRLLCCAVLCLLGAVPMET). One can recognise an Ig-like domain in the interval 22–114 (GVTQTPRHLV…SALYLCASSQ (93 aa)). Residues C42 and C110 are joined by a disulfide bond. Residues N76 and N89 are each glycosylated (N-linked (GlcNAc...) asparagine).

Alpha-beta TR is a heterodimer composed of an alpha and beta chain; disulfide-linked. The alpha-beta TR is associated with the transmembrane signaling CD3 coreceptor proteins to form the TR-CD3 (TcR or TCR). The assembly of alpha-beta TR heterodimers with CD3 occurs in the endoplasmic reticulum where a single alpha-beta TR heterodimer associates with one CD3D-CD3E heterodimer, one CD3G-CD3E heterodimer and one CD247 homodimer forming a stable octameric structure. CD3D-CD3E and CD3G-CD3E heterodimers preferentially associate with TR alpha and TR beta chains, respectively. The association of the CD247 homodimer is the last step of TcR assembly in the endoplasmic reticulum and is required for transport to the cell surface.

It is found in the cell membrane. Functionally, v region of the variable domain of T cell receptor (TR) beta chain that participates in the antigen recognition. Alpha-beta T cell receptors are antigen specific receptors which are essential to the immune response and are present on the cell surface of T lymphocytes. Recognize peptide-major histocompatibility (MH) (pMH) complexes that are displayed by antigen presenting cells (APC), a prerequisite for efficient T cell adaptive immunity against pathogens. Binding of alpha-beta TR to pMH complex initiates TR-CD3 clustering on the cell surface and intracellular activation of LCK that phosphorylates the ITAM motifs of CD3G, CD3D, CD3E and CD247 enabling the recruitment of ZAP70. In turn ZAP70 phosphorylates LAT, which recruits numerous signaling molecules to form the LAT signalosome. The LAT signalosome propagates signal branching to three major signaling pathways, the calcium, the mitogen-activated protein kinase (MAPK) kinase and the nuclear factor NF-kappa-B (NF-kB) pathways, leading to the mobilization of transcription factors that are critical for gene expression and essential for T cell growth and differentiation. The T cell repertoire is generated in the thymus, by V-(D)-J rearrangement. This repertoire is then shaped by intrathymic selection events to generate a peripheral T cell pool of self-MH restricted, non-autoaggressive T cells. Post-thymic interaction of alpha-beta TR with the pMH complexes shapes TR structural and functional avidity. The sequence is that of T cell receptor beta variable 4-3 from Homo sapiens (Human).